The chain runs to 519 residues: Maturase K (519 aa).

The protein belongs to the intron maturase 2 family. MatK subfamily.

It is found in the plastid. The protein localises to the chloroplast. Functionally, usually encoded in the trnK tRNA gene intron. Probably assists in splicing its own and other chloroplast group II introns. This is Maturase K from Aesculus pavia (Red buckeye).